The following is a 1011-amino-acid chain: Collagen alpha-2(I) chain (1011 aa).

The interval Ser-1–Ala-1011 is disordered. 4-hydroxyproline is present on residues Pro-10, Pro-13, Pro-35, and Pro-41. Residues Leu-28–Pro-67 show a composition bias toward low complexity. Lys-106 carries the post-translational modification 5-hydroxylysine; alternate. O-linked (Gal...) hydroxylysine; alternate glycosylation occurs at Lys-106. Residues Ser-167–Pro-182 are compositionally biased toward low complexity. Positions Gly-282–Gly-291 are enriched in gly residues. The segment covering Ser-292–Ser-302 has biased composition (low complexity). Residues Gly-323–Gly-332 show a composition bias toward gly residues. Residues Pro-345 to Ser-361 show a composition bias toward low complexity. 4-hydroxyproline is present on residues Pro-367 and Pro-370. The span at Leu-396–Ala-415 shows a compositional bias: low complexity. Gly residues predominate over residues Gly-464 to Gly-473. 2 stretches are compositionally biased toward low complexity: residues Pro-520–Pro-537 and Glu-549–Ala-559. The segment covering Gly-560 to Gly-578 has biased composition (gly residues). Composition is skewed to low complexity over residues Arg-588–Ser-635 and Val-642–Ala-662. A compositionally biased stretch (basic and acidic residues) spans Lys-663 to Lys-672. Residues Pro-680–Ala-690 are compositionally biased toward low complexity. The segment covering Gly-700 to Gly-709 has biased composition (gly residues). Residues Thr-711–Thr-720 show a composition bias toward low complexity. A compositionally biased stretch (gly residues) spans Gly-757–Gly-766. 2 stretches are compositionally biased toward low complexity: residues Ser-774 to Pro-801 and Leu-809 to Pro-819. Gly residues predominate over residues Gly-820–Leu-834. 2 stretches are compositionally biased toward low complexity: residues Tyr-843–Pro-856 and Glu-872–Pro-887. A compositionally biased stretch (basic and acidic residues) spans Arg-897–Pro-908. The span at Ser-981 to Pro-993 shows a compositional bias: pro residues.

Belongs to the fibrillar collagen family. In terms of assembly, trimers of one alpha 2(I) and two alpha 1(I) chains. Interacts (via C-terminus) with TMEM131 (via PapD-L domain); the interaction is direct and is involved in assembly and TRAPPIII ER-to-Golgi transport complex-dependent secretion of collagen. In terms of processing, prolines at the third position of the tripeptide repeating unit (G-X-Y) are hydroxylated in some or all of the chains. In terms of tissue distribution, expressed in bones.

It localises to the secreted. The protein localises to the extracellular space. It is found in the extracellular matrix. Functionally, type I collagen is a member of group I collagen (fibrillar forming collagen). The protein is Collagen alpha-2(I) chain of Neocnus comes (Miller's Hispaniolan ground sloth).